The sequence spans 154 residues: Putative pre-16S rRNA nuclease (154 aa).

It belongs to the YqgF nuclease family.

The protein resides in the cytoplasm. In terms of biological role, could be a nuclease involved in processing of the 5'-end of pre-16S rRNA. This is Putative pre-16S rRNA nuclease from Rickettsia conorii (strain ATCC VR-613 / Malish 7).